The following is a 345-amino-acid chain: S-adenosylmethionine:tRNA ribosyltransferase-isomerase (345 aa).

This sequence belongs to the QueA family. As to quaternary structure, monomer.

The protein resides in the cytoplasm. The catalysed reaction is 7-aminomethyl-7-carbaguanosine(34) in tRNA + S-adenosyl-L-methionine = epoxyqueuosine(34) in tRNA + adenine + L-methionine + 2 H(+). The protein operates within tRNA modification; tRNA-queuosine biosynthesis. Functionally, transfers and isomerizes the ribose moiety from AdoMet to the 7-aminomethyl group of 7-deazaguanine (preQ1-tRNA) to give epoxyqueuosine (oQ-tRNA). The sequence is that of S-adenosylmethionine:tRNA ribosyltransferase-isomerase from Helicobacter pylori (strain J99 / ATCC 700824) (Campylobacter pylori J99).